Consider the following 233-residue polypeptide: Coenzyme Q-binding protein COQ10 homolog, mitochondrial (233 aa).

Residues 1 to 34 (MAEKATSLFLRAMEISEKQSFDVMRRNSSCTIRH) constitute a mitochondrion transit peptide.

The protein belongs to the COQ10 family. Interacts with coenzyme Q.

The protein resides in the mitochondrion inner membrane. Required for the function of coenzyme Q in the respiratory chain. May serve as a chaperone or may be involved in the transport of Q6 from its site of synthesis to the catalytic sites of the respiratory complexes. In Danio rerio (Zebrafish), this protein is Coenzyme Q-binding protein COQ10 homolog, mitochondrial.